Here is an 87-residue protein sequence, read N- to C-terminus: Putative RNase MJ1548 (87 aa).

Catalysis depends on residues Arg65 and His70. Positions 65–72 match the RX(4)HXY motif motif; sequence RNAIVHKY. Tyr72 carries the O-di-AMP-tyrosine modification.

Belongs to the HepT RNase toxin family. As to quaternary structure, homodimer, probably forms a complex with cognate antitoxin MJ1547. Post-translationally, modified by cognate antitoxin MJ1547; probably at least 2 successive AMPylation events occur on Tyr-72.

In terms of biological role, probable toxic component of a putative type VII toxin-antitoxin (TA) system, probably an RNase. Probably neutralized by cognate antitoxin MJ1547. Neutralization may be due to AMPylation by antitoxin MJ1547. The polypeptide is Putative RNase MJ1548 (Methanocaldococcus jannaschii (strain ATCC 43067 / DSM 2661 / JAL-1 / JCM 10045 / NBRC 100440) (Methanococcus jannaschii)).